A 374-amino-acid chain; its full sequence is Ribosomal RNA large subunit methyltransferase G (374 aa).

Belongs to the methyltransferase superfamily. RlmG family.

It localises to the cytoplasm. The catalysed reaction is guanosine(1835) in 23S rRNA + S-adenosyl-L-methionine = N(2)-methylguanosine(1835) in 23S rRNA + S-adenosyl-L-homocysteine + H(+). Specifically methylates the guanine in position 1835 (m2G1835) of 23S rRNA. The protein is Ribosomal RNA large subunit methyltransferase G of Pseudomonas savastanoi pv. phaseolicola (strain 1448A / Race 6) (Pseudomonas syringae pv. phaseolicola (strain 1448A / Race 6)).